Consider the following 64-residue polypeptide: Large ribosomal subunit protein bL35 (64 aa).

It belongs to the bacterial ribosomal protein bL35 family.

This is Large ribosomal subunit protein bL35 from Wolinella succinogenes (strain ATCC 29543 / DSM 1740 / CCUG 13145 / JCM 31913 / LMG 7466 / NCTC 11488 / FDC 602W) (Vibrio succinogenes).